The sequence spans 350 residues: Protein SGT1 homolog A (350 aa).

TPR repeat units follow at residues 2 to 35 (AKELADKAKEAFVDDDFDVAVDLYSKAIDLDPNC), 37 to 69 (EFFADRAQAYIKLESFTEAVADANKAIELDPSL), and 71 to 103 (KAYLRKGTACMKLEEYRTAKTALEKGASITPSE). Residues 149–238 (TAKYRHEYYQ…ADIITWASLE (90 aa)) enclose the CS domain. In terms of domain architecture, SGS spans 260–350 (AYPSSKKVKD…DGMELKKWEI (91 aa)).

The protein belongs to the SGT1 family. Interacts with RAR1. Forms a ternary complex with RAR1 and barley HSP90.

Functions in R gene-mediated resistance, but participates in a lower extent than SGT1B to RPP5-mediated resistance. Not required for RPM1, RPS2, RPS4 and RPS5-mediated resistance. Probably required for SCF-mediated ubiquitination, by coupling HSP90 to SCF complex for ubiquitination of HSP90 client proteins. This chain is Protein SGT1 homolog A (SGT1A), found in Arabidopsis thaliana (Mouse-ear cress).